The sequence spans 234 residues: 2-phospho-L-lactate guanylyltransferase (234 aa).

Belongs to the CofC family. In terms of assembly, homodimer.

It catalyses the reaction (2S)-2-phospholactate + GTP + H(+) = (2S)-lactyl-2-diphospho-5'-guanosine + diphosphate. It participates in cofactor biosynthesis; coenzyme F420 biosynthesis. Its function is as follows. Guanylyltransferase that catalyzes the activation of (2S)-2-phospholactate (2-PL) as (2S)-lactyl-2-diphospho-5'-guanosine, via the condensation of 2-PL with GTP. It is involved in the biosynthesis of coenzyme F420, a hydride carrier cofactor. The protein is 2-phospho-L-lactate guanylyltransferase of Methanobrevibacter ruminantium (strain ATCC 35063 / DSM 1093 / JCM 13430 / OCM 146 / M1) (Methanobacterium ruminantium).